The chain runs to 521 residues: Cytochrome P450 1A1 (521 aa).

Substrate is bound at residue Phe229. Cys463 is a binding site for heme.

This sequence belongs to the cytochrome P450 family. Heme serves as cofactor.

The protein resides in the endoplasmic reticulum membrane. The protein localises to the microsome membrane. The enzyme catalyses an organic molecule + reduced [NADPH--hemoprotein reductase] + O2 = an alcohol + oxidized [NADPH--hemoprotein reductase] + H2O + H(+). Functionally, cytochromes P450 are a group of heme-thiolate monooxygenases. They oxidize a variety of structurally unrelated compounds, including steroids, fatty acids, and xenobiotics. This is Cytochrome P450 1A1 (cyp1a1) from Limanda limanda (Common dab).